A 524-amino-acid chain; its full sequence is Glucose-6-phosphate isomerase (524 aa).

Catalysis depends on Glu-322, which acts as the Proton donor. Residues His-351 and Lys-453 contribute to the active site.

Belongs to the GPI family.

It is found in the cytoplasm. The enzyme catalyses alpha-D-glucose 6-phosphate = beta-D-fructose 6-phosphate. The protein operates within carbohydrate biosynthesis; gluconeogenesis. It participates in carbohydrate degradation; glycolysis; D-glyceraldehyde 3-phosphate and glycerone phosphate from D-glucose: step 2/4. Functionally, catalyzes the reversible isomerization of glucose-6-phosphate to fructose-6-phosphate. This chain is Glucose-6-phosphate isomerase, found in Prochlorococcus marinus (strain NATL2A).